The sequence spans 537 residues: Oocyte zinc finger protein XlCOF29 (537 aa).

Residues 1–21 (MGMSEKASDTGMKGKKKDKNE) are disordered. 6 consecutive C2H2-type zinc fingers follow at residues 375 to 397 (FTCSECGKTYTRLYNLKIHLKSH), 403 to 425 (FSCSECEECFTDHTDLVIHRRLH), 431 to 453 (FPCAECGKCFTNCTNLRAHSKTH), 459 to 481 (YSCTECGKTFRDRSHLNIHKKRH), 487 to 509 (YTCSECGKCFAYRSNLMVHVRIH), and 515 to 537 (FSCSKCGKCFTDHANLIVHERMH).

Belongs to the krueppel C2H2-type zinc-finger protein family.

It is found in the nucleus. Its function is as follows. May be involved in transcriptional regulation. The protein is Oocyte zinc finger protein XlCOF29 of Xenopus laevis (African clawed frog).